The sequence spans 480 residues: Chromosomal replication initiator protein DnaA (480 aa).

The domain I, interacts with DnaA modulators stretch occupies residues Met1–Phe71. The interval Phe71–Ser139 is domain II. The disordered stretch occupies residues Ser91–Gly115. The span at Ala97–Ala108 shows a compositional bias: basic and acidic residues. Residues Met140 to Ala356 form a domain III, AAA+ region region. ATP contacts are provided by Gly184, Gly186, Lys187, and Thr188. A domain IV, binds dsDNA region spans residues Gln357–Val480.

Belongs to the DnaA family. Oligomerizes as a right-handed, spiral filament on DNA at oriC.

The protein resides in the cytoplasm. In terms of biological role, plays an essential role in the initiation and regulation of chromosomal replication. ATP-DnaA binds to the origin of replication (oriC) to initiate formation of the DNA replication initiation complex once per cell cycle. Binds the DnaA box (a 9 base pair repeat at the origin) and separates the double-stranded (ds)DNA. Forms a right-handed helical filament on oriC DNA; dsDNA binds to the exterior of the filament while single-stranded (ss)DNA is stabiized in the filament's interior. The ATP-DnaA-oriC complex binds and stabilizes one strand of the AT-rich DNA unwinding element (DUE), permitting loading of DNA polymerase. After initiation quickly degrades to an ADP-DnaA complex that is not apt for DNA replication. Binds acidic phospholipids. In Roseiflexus castenholzii (strain DSM 13941 / HLO8), this protein is Chromosomal replication initiator protein DnaA.